The sequence spans 257 residues: Phosphonates import ATP-binding protein PhnC (257 aa).

Residues 2–246 (IEFRNVSKVY…KFAEIYGDVA (245 aa)) enclose the ABC transporter domain. ATP is bound at residue 35 to 42 (GLSGAGKS).

The protein belongs to the ABC transporter superfamily. Phosphonates importer (TC 3.A.1.9.1) family. As to quaternary structure, the complex is composed of two ATP-binding proteins (PhnC), two transmembrane proteins (PhnE) and a solute-binding protein (PhnD).

It is found in the cell membrane. It catalyses the reaction phosphonate(out) + ATP + H2O = phosphonate(in) + ADP + phosphate + H(+). Its function is as follows. Part of the ABC transporter complex PhnCDE involved in phosphonates import. Responsible for energy coupling to the transport system. This Bacillus thuringiensis subsp. konkukian (strain 97-27) protein is Phosphonates import ATP-binding protein PhnC.